Consider the following 1073-residue polypeptide: PX domain-containing protein LEC1 (1073 aa).

Basic and acidic residues predominate over residues Cys-218 to Ser-228. Residues Cys-218–Ala-240 are disordered. The span at Lys-229–Ser-238 shows a compositional bias: low complexity. The 234-residue stretch at Leu-273–Asp-506 folds into the PX domain. Residues Ser-310 and Ser-451 each carry the phosphoserine modification. The tract at residues Ile-431 to Tyr-456 is disordered. A compositionally biased stretch (acidic residues) spans Lys-432–Phe-453.

The protein localises to the endoplasmic reticulum membrane. It is found in the lipid droplet. Functionally, phosphoinositide-binding protein that plays a role in regulation of ergosterol distribution in the cell. Facilitates ergosterol transport between plasma membrane and lipid droplets. The chain is PX domain-containing protein LEC1 from Saccharomyces cerevisiae (strain ATCC 204508 / S288c) (Baker's yeast).